A 451-amino-acid chain; its full sequence is Chromosomal replication initiator protein DnaA (451 aa).

The interval 1–82 (MENSLWKQCL…RLELQIGSSA (82 aa)) is domain I, interacts with DnaA modulators. Residues 82 to 114 (AVVAPPRRRQVSVTTPSPSAAADQTPATRSAAS) form a domain II region. Residues 85–112 (APPRRRQVSVTTPSPSAAADQTPATRSA) form a disordered region. The tract at residues 115-331 (NLNSNFTFDT…GALRRVVANA (217 aa)) is domain III, AAA+ region. Positions 159, 161, 162, and 163 each coordinate ATP. Residues 332–451 (QFTGQEITVE…YSNLLRTLST (120 aa)) form a domain IV, binds dsDNA region.

The protein belongs to the DnaA family. In terms of assembly, oligomerizes as a right-handed, spiral filament on DNA at oriC.

The protein resides in the cytoplasm. Its function is as follows. Plays an essential role in the initiation and regulation of chromosomal replication. ATP-DnaA binds to the origin of replication (oriC) to initiate formation of the DNA replication initiation complex once per cell cycle. Binds the DnaA box (a 9 base pair repeat at the origin) and separates the double-stranded (ds)DNA. Forms a right-handed helical filament on oriC DNA; dsDNA binds to the exterior of the filament while single-stranded (ss)DNA is stabiized in the filament's interior. The ATP-DnaA-oriC complex binds and stabilizes one strand of the AT-rich DNA unwinding element (DUE), permitting loading of DNA polymerase. After initiation quickly degrades to an ADP-DnaA complex that is not apt for DNA replication. Binds acidic phospholipids. This Alkalilimnicola ehrlichii (strain ATCC BAA-1101 / DSM 17681 / MLHE-1) protein is Chromosomal replication initiator protein DnaA.